Here is a 378-residue protein sequence, read N- to C-terminus: Cobalt-precorrin-5B C(1)-methyltransferase (378 aa).

Belongs to the CbiD family.

It carries out the reaction Co-precorrin-5B + S-adenosyl-L-methionine = Co-precorrin-6A + S-adenosyl-L-homocysteine. The protein operates within cofactor biosynthesis; adenosylcobalamin biosynthesis; cob(II)yrinate a,c-diamide from sirohydrochlorin (anaerobic route): step 6/10. In terms of biological role, catalyzes the methylation of C-1 in cobalt-precorrin-5B to form cobalt-precorrin-6A. The protein is Cobalt-precorrin-5B C(1)-methyltransferase of Methanococcus aeolicus (strain ATCC BAA-1280 / DSM 17508 / OCM 812 / Nankai-3).